The primary structure comprises 250 residues: 3-deoxy-manno-octulosonate cytidylyltransferase (250 aa).

It belongs to the KdsB family.

The protein localises to the cytoplasm. The catalysed reaction is 3-deoxy-alpha-D-manno-oct-2-ulosonate + CTP = CMP-3-deoxy-beta-D-manno-octulosonate + diphosphate. It participates in nucleotide-sugar biosynthesis; CMP-3-deoxy-D-manno-octulosonate biosynthesis; CMP-3-deoxy-D-manno-octulosonate from 3-deoxy-D-manno-octulosonate and CTP: step 1/1. Its pathway is bacterial outer membrane biogenesis; lipopolysaccharide biosynthesis. In terms of biological role, activates KDO (a required 8-carbon sugar) for incorporation into bacterial lipopolysaccharide in Gram-negative bacteria. This Rhizobium meliloti (strain 1021) (Ensifer meliloti) protein is 3-deoxy-manno-octulosonate cytidylyltransferase.